A 332-amino-acid chain; its full sequence is Cell division protein ZipA (332 aa).

At 1–6 the chain is on the periplasmic side; the sequence is MMQDLR. Residues 7–27 form a helical membrane-spanning segment; that stretch reads LILIVVGAIAIIALLLHGLWT. Residues 28-332 lie on the Cytoplasmic side of the membrane; sequence SRKERSSLFR…RLREVLENNA (305 aa). 2 stretches are compositionally biased toward basic and acidic residues: residues 34–51 and 61–72; these read SLFR…REQS and GEVRVRSAHPED. The interval 34-184 is disordered; it reads SLFRDRPAKR…PAVAHEPQPA (151 aa). Residues 98–107 are compositionally biased toward low complexity; sequence PAPRAVQPAA. Residues 121–136 are compositionally biased toward acidic residues; it reads DDILLDNYAQEEDDEP. Residues 155-171 are compositionally biased toward low complexity; that stretch reads PAAEPAFHAEPAHQPQP.

This sequence belongs to the ZipA family. Interacts with FtsZ via their C-terminal domains.

The protein resides in the cell inner membrane. In terms of biological role, essential cell division protein that stabilizes the FtsZ protofilaments by cross-linking them and that serves as a cytoplasmic membrane anchor for the Z ring. Also required for the recruitment to the septal ring of downstream cell division proteins. The chain is Cell division protein ZipA from Serratia proteamaculans (strain 568).